The chain runs to 87 residues: MNSALNEIKDDFENCETKNDLFKIIDKISKNCNFIVEQVESLPRRVDSAAILFDNLAVEIFNDVIYRQNGDGVAAKIRQGNGQNIDT.

The protein belongs to the herpesviridae UL91 family.

The chain is Protein U62 (U62) from Human herpesvirus 6B (strain Z29) (HHV-6 variant B).